The sequence spans 123 residues: Small ribosomal subunit protein uS12 (123 aa).

The tract at residues 1–30 is disordered; that stretch reads MPTIQQLIRKPRQPKIKRSKSQHMEGCPQK. Residues 9 to 21 show a composition bias toward basic residues; it reads RKPRQPKIKRSKS. Position 89 is a 3-methylthioaspartic acid (Asp89). The tract at residues 104-123 is disordered; sequence TQGVKDRRQRRSKYGAKRPK. Over residues 110–123 the composition is skewed to basic residues; the sequence is RRQRRSKYGAKRPK.

The protein belongs to the universal ribosomal protein uS12 family. As to quaternary structure, part of the 30S ribosomal subunit. Contacts proteins S8 and S17. May interact with IF1 in the 30S initiation complex.

Functionally, with S4 and S5 plays an important role in translational accuracy. Interacts with and stabilizes bases of the 16S rRNA that are involved in tRNA selection in the A site and with the mRNA backbone. Located at the interface of the 30S and 50S subunits, it traverses the body of the 30S subunit contacting proteins on the other side and probably holding the rRNA structure together. The combined cluster of proteins S8, S12 and S17 appears to hold together the shoulder and platform of the 30S subunit. The chain is Small ribosomal subunit protein uS12 from Jannaschia sp. (strain CCS1).